A 183-amino-acid polypeptide reads, in one-letter code: Dual-action ribosomal maturation protein DarP (183 aa).

Belongs to the DarP family.

It is found in the cytoplasm. Functionally, member of a network of 50S ribosomal subunit biogenesis factors which assembles along the 30S-50S interface, preventing incorrect 23S rRNA structures from forming. Promotes peptidyl transferase center (PTC) maturation. The protein is Dual-action ribosomal maturation protein DarP of Shigella flexneri serotype 5b (strain 8401).